Consider the following 76-residue polypeptide: UPF0352 protein ECA2748 (76 aa).

This sequence belongs to the UPF0352 family.

The protein is UPF0352 protein ECA2748 of Pectobacterium atrosepticum (strain SCRI 1043 / ATCC BAA-672) (Erwinia carotovora subsp. atroseptica).